We begin with the raw amino-acid sequence, 491 residues long: Glutamyl-tRNA(Gln) amidotransferase subunit A (491 aa).

Catalysis depends on charge relay system residues Lys-80 and Ser-155. Ser-179 serves as the catalytic Acyl-ester intermediate.

It belongs to the amidase family. GatA subfamily. In terms of assembly, heterotrimer of A, B and C subunits.

It carries out the reaction L-glutamyl-tRNA(Gln) + L-glutamine + ATP + H2O = L-glutaminyl-tRNA(Gln) + L-glutamate + ADP + phosphate + H(+). Its function is as follows. Allows the formation of correctly charged Gln-tRNA(Gln) through the transamidation of misacylated Glu-tRNA(Gln) in organisms which lack glutaminyl-tRNA synthetase. The reaction takes place in the presence of glutamine and ATP through an activated gamma-phospho-Glu-tRNA(Gln). In Salinispora arenicola (strain CNS-205), this protein is Glutamyl-tRNA(Gln) amidotransferase subunit A.